The sequence spans 318 residues: L-lactate dehydrogenase (318 aa).

Residues Val18, Asp39, Lys44, Tyr69, and 83-84 contribute to the NAD(+) site; that span reads GA. Substrate contacts are provided by Gln86 and Arg92. Residues Ser105, 122-124, and Ser147 contribute to the NAD(+) site; that span reads VSN. 124–127 is a binding site for substrate; the sequence is NPVD. 152–155 contacts substrate; that stretch reads DTSR. Catalysis depends on His179, which acts as the Proton acceptor. Tyr225 carries the post-translational modification Phosphotyrosine. Thr234 lines the substrate pocket.

Belongs to the LDH/MDH superfamily. LDH family. Homotetramer.

The protein resides in the cytoplasm. The enzyme catalyses (S)-lactate + NAD(+) = pyruvate + NADH + H(+). The protein operates within fermentation; pyruvate fermentation to lactate; (S)-lactate from pyruvate: step 1/1. Functionally, catalyzes the conversion of lactate to pyruvate. The sequence is that of L-lactate dehydrogenase from Clostridium botulinum (strain 657 / Type Ba4).